Reading from the N-terminus, the 955-residue chain is Thrombospondin-4 (955 aa).

The signal sequence occupies residues 1–24 (MPRRKGLCLFLQMLLLHLYGVCQA). Positions 25–192 (QPNYQVFDLL…MDELKLVMGG (168 aa)) constitute a Laminin G-like domain. In terms of domain architecture, EGF-like 1 spans 281 to 320 (PKPRCDATSCFRGVRCIDTEGGFQCGPCPEGYTGNGVICT). Disulfide bonds link Cys-285-Cys-296, Cys-290-Cys-305, Cys-308-Cys-319, Cys-325-Cys-336, Cys-330-Cys-345, Cys-348-Cys-372, Cys-378-Cys-392, Cys-386-Cys-401, Cys-404-Cys-416, Cys-422-Cys-435, Cys-429-Cys-445, Cys-447-Cys-458, Cys-474-Cys-479, Cys-484-Cys-504, Cys-520-Cys-540, Cys-543-Cys-563, Cys-579-Cys-599, Cys-602-Cys-622, Cys-640-Cys-660, Cys-680-Cys-700, and Cys-716-Cys-937. The region spanning 321–358 (DVDECRLNPCFLGVRCINTSPGFKCESCPPGYTGSTIQ) is the EGF-like 2; calcium-binding domain. One can recognise an EGF-like 3; calcium-binding domain in the interval 374-415 (DTNECENGRNGGCTSNSLCINTMGSFRCGGCKPGYVGDQIKG). The region spanning 418-459 (PEKSCRHGQNPCHASAQCSEEKDGDVTCTCSVGWAGNGYLCG) is the EGF-like 4 domain. TSP type-3 repeat units follow at residues 460–492 (KDTD…NSGQ), 493–528 (EDTD…NIDQ), 529–551 (KNSD…NNDQ), 552–587 (RDTD…NVDQ), 588–610 (KDKD…NPNQ), 611–648 (SDID…NSNQ), 649–688 (LDTD…NPGQ), and 689–724 (EDDN…EITL). N-linked (GlcNAc...) asparagine glycosylation is present at Asn-609. The tract at residues 610–678 (QSDIDNDLVG…IPDTVPPGPD (69 aa)) is disordered. Positions 637 to 649 (TDNCPTVINSNQL) are enriched in polar residues. Residues 657–668 (GDECDDDDDNDG) are compositionally biased toward acidic residues. The TSP C-terminal domain maps to 728–942 (RAYQTVVLDP…LKYRCNDTIP (215 aa)). N-linked (GlcNAc...) asparagine glycosylation occurs at Asn-938.

It belongs to the thrombospondin family. In terms of assembly, homotrimer; disulfide-linked.

It is found in the endoplasmic reticulum. The protein localises to the sarcoplasmic reticulum. Its subcellular location is the secreted. The protein resides in the extracellular space. It localises to the extracellular matrix. Functionally, adhesive glycoprotein that mediates cell-to-cell and cell-to-matrix interactions and may be involved in various processes including cellular proliferation, migration, adhesion and attachment. May play a role in ER stress response. May participate in the genesis and function of cardiac and skeletal muscle. In Xenopus laevis (African clawed frog), this protein is Thrombospondin-4 (thbs4).